The sequence spans 79 residues: UPF0154 protein SUB0399 (79 aa).

A helical membrane pass occupies residues 4-24 (AIWILLIVLALIGGLFGGVFI).

Belongs to the UPF0154 family.

It localises to the cell membrane. In Streptococcus uberis (strain ATCC BAA-854 / 0140J), this protein is UPF0154 protein SUB0399.